Here is a 152-residue protein sequence, read N- to C-terminus: MDLELFDDDQLLDDKHHDLIKKLVAFCGKQLKLPENTEMSITLVGDDEIERINREYRETDRVTDVISFAIEEGEDDLPLLPGMAKNIGDLFIDPLTVRRHAEEYGHSFERELGYTVVHGFLHLNGYDHIKPEDEAVMIPLQKKILAAYGLTR.

Zn(2+)-binding residues include H118, H122, and H128.

Belongs to the endoribonuclease YbeY family. Requires Zn(2+) as cofactor.

The protein localises to the cytoplasm. In terms of biological role, single strand-specific metallo-endoribonuclease involved in late-stage 70S ribosome quality control and in maturation of the 3' terminus of the 16S rRNA. The chain is Endoribonuclease YbeY from Lacticaseibacillus casei (strain BL23) (Lactobacillus casei).